Here is a 298-residue protein sequence, read N- to C-terminus: MQVFTLFSKFKKALTRAILAFIATIIVCTPAQAAEVVNGKLHLRFAIAPMRPTPSQTIKEFEPIFKYLADQLGATYEIVSPESWAAISVAMTNGHVDVGWLGPWGYVLSNKKAGTEVLATVKYRGEPFYKALIVGRADLPIKKWPEDAKGLKLSLSDQGNTSGWLIPMAYFKSIGIDPASYFEYREGATFGQNESQIQHGLIDLGSDMDRGRNGMIEAGQIDPSKSKIVWESSKLPNDAISVPKDFDPALKARITEILTSLSEEKAQSLMGSGYNGFVKAKHSDYKVIEDAGRILGKL.

The N-terminal stretch at 1 to 33 is a signal peptide; the sequence is MQVFTLFSKFKKALTRAILAFIATIIVCTPAQA.

It belongs to the phosphate/phosphite/phosphonate binding protein family.

Its function is as follows. Probably forms part of a binding-protein-dependent hypophosphite transporter. This is Probable phosphite transport system-binding protein HtxB (htxB) from Stutzerimonas stutzeri (Pseudomonas stutzeri).